The primary structure comprises 319 residues: 3-oxoacyl-[acyl-carrier-protein] reductase, chloroplastic (319 aa).

The transit peptide at M1–K57 directs the protein to the chloroplast. The residue at position 58 (A58) is an N-acetylalanine. Position 81-105 (I81–V105) interacts with NADP(+). S213 is a binding site for substrate. Y226 functions as the Proton acceptor in the catalytic mechanism.

It belongs to the short-chain dehydrogenases/reductases (SDR) family. In terms of assembly, homotetramer.

The protein localises to the plastid. The protein resides in the chloroplast. It carries out the reaction a (3R)-hydroxyacyl-[ACP] + NADP(+) = a 3-oxoacyl-[ACP] + NADPH + H(+). It functions in the pathway lipid metabolism; fatty acid biosynthesis. This chain is 3-oxoacyl-[acyl-carrier-protein] reductase, chloroplastic, found in Arabidopsis thaliana (Mouse-ear cress).